The chain runs to 60 residues: Large ribosomal subunit protein uL30 (60 aa).

Belongs to the universal ribosomal protein uL30 family. In terms of assembly, part of the 50S ribosomal subunit.

In Leifsonia xyli subsp. xyli (strain CTCB07), this protein is Large ribosomal subunit protein uL30.